A 424-amino-acid polypeptide reads, in one-letter code: Hemagglutinin-esterase (424 aa).

The signal sequence occupies residues 1–16 (MFLLPRFVLVSCIIGS). The tract at residues 7–127 (FVLVSCIIGS…SNDIWMQNKG (121 aa)) is esterase domain 1. Topologically, residues 17-392 (LGFENPPTNV…PICVYDPLPL (376 aa)) are virion surface. S40 (nucleophile) is an active-site residue. A disulfide bond links C44 and C65. N-linked (GlcNAc...) asparagine; by host glycans are attached at residues N54, N89, N153, N236, and N301. 3 cysteine pairs are disulfide-bonded: C113–C162, C197–C276, and C205–C249. Residues 128-266 (LFYTQVYKNM…GNYLAISNEL (139 aa)) form a receptor binding region. Residues 267–379 (LLTVPTKAIC…RCPTAADINT (113 aa)) are esterase domain 2. The cysteines at positions 307 and 312 are disulfide-linked. N-linked (GlcNAc...) asparagine; by host glycosylation is present at N316. Catalysis depends on charge relay system residues D326 and H329. The cysteines at positions 347 and 371 are disulfide-linked. N-linked (GlcNAc...) asparagine; by host glycosylation is present at N358. Residues 393-413 (ILLGILLGVAVIIIVVLLLYF) traverse the membrane as a helical segment. Residues 414-424 (MVDNGTRLHDA) lie on the Intravirion side of the membrane. N-linked (GlcNAc...) asparagine; by host glycosylation is present at N417.

The protein belongs to the influenza type C/coronaviruses hemagglutinin-esterase family. In terms of assembly, homodimer; disulfide-linked. Forms a complex with the M protein in the pre-Golgi. Associates then with S-M complex to form a ternary complex S-M-HE. N-glycosylated in the host RER.

It is found in the virion membrane. Its subcellular location is the host cell membrane. It carries out the reaction N-acetyl-9-O-acetylneuraminate + H2O = N-acetylneuraminate + acetate + H(+). The enzyme catalyses N-acetyl-4-O-acetylneuraminate + H2O = N-acetylneuraminate + acetate + H(+). Its function is as follows. Structural protein that makes short spikes at the surface of the virus. Contains receptor binding and receptor-destroying activities. Mediates de-O-acetylation of N-acetyl-4-O-acetylneuraminic acid, which is probably the receptor determinant recognized by the virus on the surface of erythrocytes and susceptible cells. This receptor-destroying activity is important for virus release as it probably helps preventing self-aggregation and ensures the efficient spread of the progeny virus from cell to cell. May serve as a secondary viral attachment protein for initiating infection, the spike protein being the major one. May become a target for both the humoral and the cellular branches of the immune system. The polypeptide is Hemagglutinin-esterase (Bovine coronavirus (strain G95) (BCoV)).